The sequence spans 952 residues: Bromodomain testis-specific protein (952 aa).

The Bromo 1 domain maps to 26–132 (RLTNQLQFLQ…KLFMQKLSQM (107 aa)). Positions 141–150 (GKERMKKDIQ) are enriched in basic and acidic residues. The disordered stretch occupies residues 141-168 (GKERMKKDIQQKTAVSSAKEQTPSKSAE). Positions 151 to 167 (QKTAVSSAKEQTPSKSA) are enriched in polar residues. Ser186 carries the phosphoserine modification. The Nuclear localization signal motif lies at 208-219 (KGVKRRADTTTP). Residues 209–257 (GVKRRADTTTPTTSSAKASSESPPPLREAKPANAPVKENTVKSVLPDSQ) form a disordered region. Over residues 216 to 229 (TTTPTTSSAKASSE) the composition is skewed to low complexity. The region spanning 266–375 (VKVTEQLKHC…DVFEMHFAKI (110 aa)) is the Bromo 2 domain. Disordered stretches follow at residues 392–420 (SAKA…ERVQ), 442–504 (VPLR…NAKP), 607–746 (QLNC…GCQV), and 850–930 (KHLE…RREA). Positions 417-442 (ERVQRLAKLQEQLNAVHQQLQVLSQV) form a coiled coil. Basic residues predominate over residues 445 to 463 (RKLKKKNEKSKRAPKRKKV). The region spanning 495-577 (KLEEEDNAKP…ACLRKRSLKP (83 aa)) is the NET domain. Basic residues predominate over residues 610–619 (CRKRQTKRPA). The segment covering 625–638 (PRPPLPPPPPPPPE) has biased composition (pro residues). Over residues 646 to 681 (SDSSSSSSSSGSGSSSSSSSSSGSGSSSSDSSSSDS) the composition is skewed to low complexity. Positions 718-729 (SAETALVQQSTG) are enriched in polar residues. Positions 837-936 (EKEVKARTQE…RREAMAGTID (100 aa)) form a coiled coil. A compositionally biased stretch (basic and acidic residues) spans 850-867 (KHLEHSAKDPKVSQESQR). The span at 874–883 (TPESSSNKVQ) shows a compositional bias: polar residues. The span at 893–902 (EQQQLPSPSE) shows a compositional bias: low complexity. The segment covering 911-930 (LLKDRNLAREKEQERRRREA) has biased composition (basic and acidic residues).

Belongs to the BET family. As to quaternary structure, interacts with the acetylated N-terminus of histone H1, H2, H3 and H4. Interacts with P-TEFb components CDK9 and CCNT1/cyclin-T1. Interacts with mRNA splicing machinery proteins SRSF2, DDX5, HNRNPK and TARDBP. Interacts with SMARCE1. Post-translationally, ubiquitinated in a SPOP-dependent manner, leading to proteasomal degradation.

It localises to the nucleus. In terms of biological role, testis-specific chromatin protein that specifically binds histone H4 acetylated at 'Lys-5' and 'Lys-8' (H4K5ac and H4K8ac, respectively) and plays a key role in spermatogenesis. Required in late pachytene spermatocytes: plays a role in meiotic and post-meiotic cells by binding to acetylated histones at the promoter of specific meiotic and post-meiotic genes, facilitating their activation at the appropriate time. In the post-meiotic phase of spermatogenesis, binds to hyperacetylated histones and participates in their general removal from DNA. Also recognizes and binds a subset of butyrylated histones: able to bind histone H4 butyrylated at 'Lys-8' (H4K8ac), while it is not able to bind H4 butyrylated at 'Lys-5' (H4K5ac). Also acts as a component of the splicing machinery in pachytene spermatocytes and round spermatids and participates in 3'-UTR truncation of specific mRNAs in post-meiotic spermatids. Required for chromocenter organization, a structure comprised of peri-centromeric heterochromatin. This is Bromodomain testis-specific protein (Brdt) from Rattus norvegicus (Rat).